The primary structure comprises 418 residues: F-box protein At5g03970 (418 aa).

Residues 18-66 (STHEVLNSNDTMCEILILLPPETIYKLILVSKRWLEIIASPCFRHTYLA) form the F-box domain.

This is F-box protein At5g03970 from Arabidopsis thaliana (Mouse-ear cress).